The sequence spans 180 residues: Homeobox protein ceh-12 (180 aa).

Residues S15–S37 form a disordered region. The segment at residues M110–P169 is a DNA-binding region (homeobox).

As to expression, expressed in VB motor neurons in the ventral nerve cord.

The protein resides in the nucleus. Its function is as follows. Transcription factor. Plays a role, downstream from homeobox protein unc-4 and Wnt signaling, in specifying synaptic inputs to A-class motor neurons. Involved in patterning of the synaptic outputs of the postmitotic DA class cholinergic motor neurons. The sequence is that of Homeobox protein ceh-12 (ceh-12) from Caenorhabditis elegans.